The sequence spans 946 residues: Increased sodium tolerance protein 2 (946 aa).

At 1-121 (MSQTITSLDP…SNLTNNPKQS (121 aa)) the chain is on the cytoplasmic side. Residues 122-142 (LYFAFLQNYIKWLIPFSFFGL) form a helical membrane-spanning segment. Residues 143-153 (SIRFLSNFTYE) lie on the Extracellular side of the membrane. A helical membrane pass occupies residues 154–174 (FNSTYSLFAILWTLSFTAFWL). The Cytoplasmic segment spans residues 175–217 (YKYEPFWSDRLSKYSSFSTIEFLQDKQKAQKKASSVIMLKKCC). A helical membrane pass occupies residues 218 to 238 (FIPVALLFGAILLSFQLYCFA). The Extracellular segment spans residues 239–253 (LEIFIKQIYNGPMIS). Residues 254-274 (ILSFLPTILICTFTPVLTVIY) form a helical membrane-spanning segment. Residues 275–302 (NKYFVEPMTKWENHSSVVNAKKSKEAKN) lie on the Cytoplasmic side of the membrane. Residues 303–323 (FVIIFLSSYVPLLITLFLYLP) form a helical membrane-spanning segment. The Extracellular segment spans residues 324–447 (MGHLLTAEIR…DANFKKLLLQ (124 aa)). A helical transmembrane segment spans residues 448-468 (FGYLVMFSTIWPLAPFICLIV). The Cytoplasmic segment spans residues 469 to 505 (NLIVYQVDLRKAVLYSKPEYFPFPIYDKPSSVSNTQK). Residues 506 to 526 (LTVGLWNSVLVMFSILGCVIT) traverse the membrane as a helical segment. Over 527 to 563 (ATLTYMYQSCNIPGVGAHTSIHTNKAWYLANPINHSW) the chain is Extracellular. Residues 564–584 (INIVLYAVFIEHVSVAIFFLF) traverse the membrane as a helical segment. Residues 585 to 946 (SSILKSSHDD…GLLHKLKKKL (362 aa)) lie on the Cytoplasmic side of the membrane. 2 disordered regions span residues 617-638 (EKIP…RKGS) and 665-718 (THAN…TEKR). Basic and acidic residues predominate over residues 628 to 638 (NEKELVQRKGS). Serine 638 is modified (phosphoserine). A compositionally biased stretch (low complexity) spans 671-689 (PSSLSSASSPSLSSSSSSS). The residue at position 701 (threonine 701) is a Phosphothreonine. Residues serine 704 and serine 720 each carry the phosphoserine modification. Threonine 726 is subject to Phosphothreonine. The residue at position 729 (serine 729) is a Phosphoserine. Tyrosine 730 bears the Phosphotyrosine mark. Serine 757 carries the post-translational modification Phosphoserine. The tract at residues 759–784 (RDAKSSAESSNATNNNTLGTESKLLP) is disordered. Positions 764 to 775 (SAESSNATNNNT) are enriched in low complexity. Phosphoserine occurs at positions 793, 844, and 847. Residues 846-946 (VSVATEQTKK…GLLHKLKKKL (101 aa)) are disordered. Phosphothreonine is present on threonine 850. Over residues 859–868 (STKNGPSRSI) the composition is skewed to polar residues. The span at 884–893 (TTTTTTTDAT) shows a compositional bias: low complexity. Residues 895-905 (PHHHHHHHRHR) are compositionally biased toward basic residues. A compositionally biased stretch (low complexity) spans 916–927 (SKTTESSSSSSA). The span at 931-946 (KPKHKKGLLHKLKKKL) shows a compositional bias: basic residues.

As to quaternary structure, interacts with BTN2.

It localises to the cell membrane. In terms of biological role, may be involved in ion homeostasis together with BTN1 or BTN2. This Saccharomyces cerevisiae (strain ATCC 204508 / S288c) (Baker's yeast) protein is Increased sodium tolerance protein 2 (IST2).